Consider the following 57-residue polypeptide: MIKWAIIFFVISVIAGLLGFTGVAAGAAGIARVLFYIALAIFLIVLVFGVLLGVLVF.

Transmembrane regions (helical) follow at residues Trp-4–Ala-24 and Ile-37–Phe-57.

It belongs to the UPF0391 family.

It localises to the cell membrane. This chain is UPF0391 membrane protein AZOSEA39630, found in Aromatoleum aromaticum (strain DSM 19018 / LMG 30748 / EbN1) (Azoarcus sp. (strain EbN1)).